Consider the following 122-residue polypeptide: MQRIMLRAKLHRVTVTEADLHYEGSCGIDEDLLDAAGMREFERIELYNVTNGERFDTYIIKAARGSGAISLNGAAARRAQVGDLLIICTYGPMSEEQSAAHKPQVVLVDDANRVKEIRKFPA.

S25 serves as the catalytic Schiff-base intermediate with substrate; via pyruvic acid. The residue at position 25 (S25) is a Pyruvic acid (Ser). T57 contacts substrate. Y58 serves as the catalytic Proton donor. A substrate-binding site is contributed by 73–75 (GAA).

This sequence belongs to the PanD family. In terms of assembly, heterooctamer of four alpha and four beta subunits. The cofactor is pyruvate. Is synthesized initially as an inactive proenzyme, which is activated by self-cleavage at a specific serine bond to produce a beta-subunit with a hydroxyl group at its C-terminus and an alpha-subunit with a pyruvoyl group at its N-terminus.

Its subcellular location is the cytoplasm. The catalysed reaction is L-aspartate + H(+) = beta-alanine + CO2. Its pathway is cofactor biosynthesis; (R)-pantothenate biosynthesis; beta-alanine from L-aspartate: step 1/1. Functionally, catalyzes the pyruvoyl-dependent decarboxylation of aspartate to produce beta-alanine. This Bordetella pertussis (strain Tohama I / ATCC BAA-589 / NCTC 13251) protein is Aspartate 1-decarboxylase.